Consider the following 189-residue polypeptide: Inosine triphosphate pyrophosphatase (189 aa).

Position 14–19 (14–19 (TGNQNK)) interacts with ITP. Glutamate 42 is a binding site for Mg(2+). ITP-binding positions include lysine 54, 70–71 (DT), lysine 87, 146–149 (FGWD), lysine 167, and 172–173 (HR).

Belongs to the HAM1 NTPase family. Homodimer. It depends on Mg(2+) as a cofactor. Requires Mn(2+) as cofactor.

Its subcellular location is the cytoplasm. It localises to the nucleus. It carries out the reaction ITP + H2O = IMP + diphosphate + H(+). The catalysed reaction is dITP + H2O = dIMP + diphosphate + H(+). The enzyme catalyses XTP + H2O = XMP + diphosphate + H(+). Pyrophosphatase that hydrolyzes non-canonical purine nucleotides such as inosine triphosphate (ITP), deoxyinosine triphosphate (dITP) or xanthosine 5'-triphosphate (XTP) to their respective monophosphate derivatives. The enzyme does not distinguish between the deoxy- and ribose forms. Probably excludes non-canonical purines from RNA and DNA precursor pools, thus preventing their incorporation into RNA and DNA and avoiding chromosomal lesions. This Pyricularia oryzae (strain 70-15 / ATCC MYA-4617 / FGSC 8958) (Rice blast fungus) protein is Inosine triphosphate pyrophosphatase.